The primary structure comprises 231 residues: Large ribosomal subunit protein uL1 (231 aa).

This sequence belongs to the universal ribosomal protein uL1 family. In terms of assembly, part of the 50S ribosomal subunit.

Its function is as follows. Binds directly to 23S rRNA. The L1 stalk is quite mobile in the ribosome, and is involved in E site tRNA release. Protein L1 is also a translational repressor protein, it controls the translation of the L11 operon by binding to its mRNA. In Thioalkalivibrio sulfidiphilus (strain HL-EbGR7), this protein is Large ribosomal subunit protein uL1.